The following is a 597-amino-acid chain: MRSHYCGDVNKSHVGQEVTLVGWVNRSRDLGGVVFLDLRDREGIVQVVYDPDLPEVFDVASTLRSEFCVQIKGLVRARPDSQINADMRTGEVEILGLELTILNSSAPLPINMDKNQHNTEEQRLKYRYLDLRRPEMADRIVFRSKVTSAVRRFLDGNGFLDIETPILTKATPEGARDYLVPSRTYKGQFFALPQSPQLFKQLLMMSGFDRYYQIVKCFRDEDLRADRQPEFTQIDIETSFMTSAQVMDKTEEMVRGLFKELLNVDLGEFPKMTFEEAMRRFGSDKPDLRNPLELIDVADIVKEVEFAVFNGPANDPEGRVAVLSIPGGAKLSRKQLDEYAKYVTIYGAKGLAWMKVNDLAQGMEGIQSPVLKFLSEDVVNALLERTGAQTGDLILFGADKANIVAEAMGALRLKAGEDFDLLQGEWKPLWVVDFPMFERTSDGGLHAMHHPFTAPSNMTPEELEANPIGAISDAYDMVLNGCELGGGSVRIHDSKMQSAVFRILGINDEEASEKFGFLLEALRYGTPPHAGLAFGLDRIIMLMTGASSIRDVMAFPKTTTAACPLTNAPGFANPVQLAELGVSVVEAEPKADAKDTE.

L-aspartate is bound at residue Glu173. The interval 197–200 is aspartate; it reads QLFK. Arg219 contributes to the L-aspartate binding site. Residues 219–221 and Gln228 contribute to the ATP site; that span reads RDE. His449 is a binding site for L-aspartate. Glu483 lines the ATP pocket. Position 490 (Arg490) interacts with L-aspartate. 535 to 538 contacts ATP; it reads GLDR.

This sequence belongs to the class-II aminoacyl-tRNA synthetase family. Type 1 subfamily. Homodimer.

The protein resides in the cytoplasm. The catalysed reaction is tRNA(Asp) + L-aspartate + ATP = L-aspartyl-tRNA(Asp) + AMP + diphosphate. Its function is as follows. Catalyzes the attachment of L-aspartate to tRNA(Asp) in a two-step reaction: L-aspartate is first activated by ATP to form Asp-AMP and then transferred to the acceptor end of tRNA(Asp). This Shewanella pealeana (strain ATCC 700345 / ANG-SQ1) protein is Aspartate--tRNA ligase.